Here is a 186-residue protein sequence, read N- to C-terminus: Probable nicotinate-nucleotide adenylyltransferase (186 aa).

The protein belongs to the NadD family.

It catalyses the reaction nicotinate beta-D-ribonucleotide + ATP + H(+) = deamido-NAD(+) + diphosphate. Its pathway is cofactor biosynthesis; NAD(+) biosynthesis; deamido-NAD(+) from nicotinate D-ribonucleotide: step 1/1. In terms of biological role, catalyzes the reversible adenylation of nicotinate mononucleotide (NaMN) to nicotinic acid adenine dinucleotide (NaAD). The chain is Probable nicotinate-nucleotide adenylyltransferase from Tropheryma whipplei (strain TW08/27) (Whipple's bacillus).